We begin with the raw amino-acid sequence, 1054 residues long: Acid trehalase (1054 aa).

Residues 1-21 form the signal peptide; it reads MRFKSVFTLLPLLAQLPSGGA. N-linked (GlcNAc...) asparagine glycans are attached at residues asparagine 47, asparagine 135, asparagine 176, asparagine 283, and asparagine 307. 448–449 is a substrate binding site; it reads WD. N-linked (GlcNAc...) asparagine glycans are attached at residues asparagine 493, asparagine 513, asparagine 570, and asparagine 578. Glutamate 584 (proton donor) is an active-site residue. Residues asparagine 618 and asparagine 644 are each glycosylated (N-linked (GlcNAc...) asparagine). 650–651 is a binding site for substrate; it reads KQ. Asparagine 665, asparagine 734, asparagine 803, asparagine 826, asparagine 838, asparagine 903, asparagine 937, asparagine 966, and asparagine 992 each carry an N-linked (GlcNAc...) asparagine glycan.

This sequence belongs to the glycosyl hydrolase 65 family.

It catalyses the reaction alpha,alpha-trehalose + H2O = alpha-D-glucose + beta-D-glucose. The sequence is that of Acid trehalase (treA) from Emericella nidulans (strain FGSC A4 / ATCC 38163 / CBS 112.46 / NRRL 194 / M139) (Aspergillus nidulans).